Reading from the N-terminus, the 25-residue chain is Pregnancy-associated glycoprotein 59g (25 aa).

Asn4 carries N-linked (GlcNAc...) asparagine glycosylation.

It belongs to the peptidase A1 family. In terms of tissue distribution, highly expressed in the placenta between day 60 and day 100 of gestation.

The protein localises to the secreted. It is found in the extracellular space. This is Pregnancy-associated glycoprotein 59g from Ovis aries (Sheep).